The following is a 418-amino-acid chain: Actin-related protein 3-A (418 aa).

Belongs to the actin family. ARP3 subfamily. Component of the Arp2/3 complex composed of actr2/arp2, actr3/arp3, arpc1 (arpc1a or arpc1b), arpc2, arpc3, arpc4 and arpc5.

It is found in the cytoplasm. The protein localises to the cytoskeleton. Its subcellular location is the cell projection. It localises to the nucleus. In terms of biological role, ATP-binding component of the Arp2/3 complex, a multiprotein complex that mediates actin polymerization upon stimulation by nucleation-promoting factor (NPF). The Arp2/3 complex mediates the formation of branched actin networks in the cytoplasm, providing the force for cell motility. Seems to contact the pointed end of the daughter actin filament. In addition to its role in the cytoplasmic cytoskeleton, the Arp2/3 complex also promotes actin polymerization in the nucleus, thereby regulating gene transcription and repair of damaged DNA. The Arp2/3 complex promotes homologous recombination (HR) repair in response to DNA damage by promoting nuclear actin polymerization, leading to drive motility of double-strand breaks (DSBs). In Xenopus laevis (African clawed frog), this protein is Actin-related protein 3-A.